We begin with the raw amino-acid sequence, 220 residues long: Metalloproteinase inhibitor 2 (220 aa).

An N-terminal signal peptide occupies residues 1-26 (MGAAARSLPLAFCLLLLGTLLPRADA). Zn(2+) is bound at residue cysteine 27. Positions 27 to 30 (CSCS) are involved in metalloproteinase-binding. Cystine bridges form between cysteine 27–cysteine 98, cysteine 29–cysteine 127, cysteine 39–cysteine 152, cysteine 154–cysteine 201, cysteine 159–cysteine 164, and cysteine 172–cysteine 193. The NTR domain occupies 27-152 (CSCSPVHPQQ…SLNHRYQMGC (126 aa)).

It belongs to the protease inhibitor I35 (TIMP) family. Interacts (via the C-terminal) with MMP2 (via the C-terminal PEX domain); the interaction inhibits the MMP2 activity. The activity of TIMP2 is dependent on the presence of disulfide bonds.

It is found in the secreted. Its function is as follows. Complexes with metalloproteinases (such as collagenases) and irreversibly inactivates them by binding to their catalytic zinc cofactor. This Bos taurus (Bovine) protein is Metalloproteinase inhibitor 2 (TIMP2).